Consider the following 134-residue polypeptide: Acyl carrier protein, chloroplastic (134 aa).

A chloroplast-targeting transit peptide spans 1–51; it reads MSTTFCSSVSMQATSLAATTRISFQKPALVSRTNLSFNLSRSIPTRLSVSC. A Carrier domain is found at 55–130; it reads PETVEKVSKI…EAAELIDELV (76 aa). Position 90 is an O-(pantetheine 4'-phosphoryl)serine (Ser-90).

Belongs to the acyl carrier protein (ACP) family. In terms of processing, 4'-phosphopantetheine is transferred from CoA to a specific serine of apo-ACP by acpS. This modification is essential for activity because fatty acids are bound in thioester linkage to the sulfhydryl of the prosthetic group. In terms of tissue distribution, seed.

Its subcellular location is the plastid. It localises to the chloroplast. The protein operates within lipid metabolism; fatty acid biosynthesis. Carrier of the growing fatty acid chain in fatty acid biosynthesis. The protein is Acyl carrier protein, chloroplastic (ACL1.A1) of Brassica napus (Rape).